Here is a 586-residue protein sequence, read N- to C-terminus: Kinesin-like protein KIF25 (586 aa).

Residues 10-94 (SFWEQRTRQL…VIQKLNQDIQ (85 aa)) adopt a coiled-coil conformation. The Kinesin motor domain occupies 173 to 565 (NIRVHCRIRP…LGFGIRARQV (393 aa)). Position 267–274 (267–274 (GQTGSGKS)) interacts with ATP. 2 disordered regions span residues 417-460 (TADQ…AGRA) and 564-586 (QVQR…RRPD).

This sequence belongs to the TRAFAC class myosin-kinesin ATPase superfamily. Kinesin family. Homotetramer.

Its subcellular location is the cytoplasm. It is found in the cytoskeleton. The protein resides in the microtubule organizing center. It localises to the centrosome. Functionally, minus-end microtubule-dependent motor protein. Acts as a negative regulator of centrosome separation required to prevent premature centrosome separation during interphase. Required to maintain a centered nucleus to ensure that the spindle is stably oriented at the onset of mitosis. May also act as a negative regulator of amino acid starvation-induced autophagy. The chain is Kinesin-like protein KIF25 from Macaca fascicularis (Crab-eating macaque).